The sequence spans 127 residues: Aspartate 1-decarboxylase (127 aa).

Residue Ser25 is the Schiff-base intermediate with substrate; via pyruvic acid of the active site. The residue at position 25 (Ser25) is a Pyruvic acid (Ser). Thr57 is a binding site for substrate. Residue Tyr58 is the Proton donor of the active site. 73–75 (GSA) is a substrate binding site.

This sequence belongs to the PanD family. As to quaternary structure, heterooctamer of four alpha and four beta subunits. Pyruvate serves as cofactor. In terms of processing, is synthesized initially as an inactive proenzyme, which is activated by self-cleavage at a specific serine bond to produce a beta-subunit with a hydroxyl group at its C-terminus and an alpha-subunit with a pyruvoyl group at its N-terminus.

The protein resides in the cytoplasm. The catalysed reaction is L-aspartate + H(+) = beta-alanine + CO2. It functions in the pathway cofactor biosynthesis; (R)-pantothenate biosynthesis; beta-alanine from L-aspartate: step 1/1. Functionally, catalyzes the pyruvoyl-dependent decarboxylation of aspartate to produce beta-alanine. The polypeptide is Aspartate 1-decarboxylase (Laribacter hongkongensis (strain HLHK9)).